The following is a 141-amino-acid chain: HTH-type transcriptional regulator ZntR (141 aa).

The 70-residue stretch at 1–70 (MYRIGELAKM…LESIRELLSI (70 aa)) folds into the HTH merR-type domain. Positions 4 to 23 (IGELAKMAEVTPDTIRYYEK) form a DNA-binding region, H-T-H motif. Cys-114, Cys-115, His-119, and Cys-124 together coordinate Zn(2+).

As to quaternary structure, homodimer.

In terms of biological role, zinc-responsive transcriptional regulator of zntA. This is HTH-type transcriptional regulator ZntR (zntR) from Escherichia coli O157:H7.